A 179-amino-acid polypeptide reads, in one-letter code: UPF0227 protein PM0825 (179 aa).

This sequence belongs to the UPF0227 family.

The chain is UPF0227 protein PM0825 from Pasteurella multocida (strain Pm70).